The primary structure comprises 183 residues: Large ribosomal subunit protein uL5 (183 aa).

Belongs to the universal ribosomal protein uL5 family. As to quaternary structure, part of the 50S ribosomal subunit; part of the 5S rRNA/L5/L18/L25 subcomplex. Contacts the 5S rRNA and the P site tRNA. Forms a bridge to the 30S subunit in the 70S ribosome.

This is one of the proteins that bind and probably mediate the attachment of the 5S RNA into the large ribosomal subunit, where it forms part of the central protuberance. In the 70S ribosome it contacts protein S13 of the 30S subunit (bridge B1b), connecting the 2 subunits; this bridge is implicated in subunit movement. Contacts the P site tRNA; the 5S rRNA and some of its associated proteins might help stabilize positioning of ribosome-bound tRNAs. In Kosmotoga olearia (strain ATCC BAA-1733 / DSM 21960 / TBF 19.5.1), this protein is Large ribosomal subunit protein uL5.